The sequence spans 193 residues: Adenine phosphoribosyltransferase (193 aa).

Belongs to the purine/pyrimidine phosphoribosyltransferase family. As to quaternary structure, homodimer.

The protein resides in the cytoplasm. It carries out the reaction AMP + diphosphate = 5-phospho-alpha-D-ribose 1-diphosphate + adenine. Its pathway is purine metabolism; AMP biosynthesis via salvage pathway; AMP from adenine: step 1/1. Catalyzes a salvage reaction resulting in the formation of AMP, that is energically less costly than de novo synthesis. This Bifidobacterium longum (strain NCC 2705) protein is Adenine phosphoribosyltransferase.